Consider the following 326-residue polypeptide: Eukaryotic translation initiation factor 3 subunit I (326 aa).

WD repeat units lie at residues 8–47 (GHER…RLGT), 50–89 (GHQG…IIAS), 145–184 (MTES…KVVD), 188–227 (DHAA…CLKT), and 285–326 (GHFG…NIFE).

This sequence belongs to the eIF-3 subunit I family. As to quaternary structure, component of the eukaryotic translation initiation factor 3 (eIF-3) complex. The eIF-3 complex interacts with pix.

It is found in the cytoplasm. Component of the eukaryotic translation initiation factor 3 (eIF-3) complex, which is involved in protein synthesis of a specialized repertoire of mRNAs and, together with other initiation factors, stimulates binding of mRNA and methionyl-tRNAi to the 40S ribosome. The eIF-3 complex specifically targets and initiates translation of a subset of mRNAs involved in cell proliferation. This Drosophila pseudoobscura pseudoobscura (Fruit fly) protein is Eukaryotic translation initiation factor 3 subunit I.